The following is a 245-amino-acid chain: 1-(5-phosphoribosyl)-5-[(5-phosphoribosylamino)methylideneamino] imidazole-4-carboxamide isomerase (245 aa).

D7 (proton acceptor) is an active-site residue. The Proton donor role is filled by D129.

It belongs to the HisA/HisF family.

It is found in the cytoplasm. It catalyses the reaction 1-(5-phospho-beta-D-ribosyl)-5-[(5-phospho-beta-D-ribosylamino)methylideneamino]imidazole-4-carboxamide = 5-[(5-phospho-1-deoxy-D-ribulos-1-ylimino)methylamino]-1-(5-phospho-beta-D-ribosyl)imidazole-4-carboxamide. It participates in amino-acid biosynthesis; L-histidine biosynthesis; L-histidine from 5-phospho-alpha-D-ribose 1-diphosphate: step 4/9. The chain is 1-(5-phosphoribosyl)-5-[(5-phosphoribosylamino)methylideneamino] imidazole-4-carboxamide isomerase from Escherichia coli O9:H4 (strain HS).